We begin with the raw amino-acid sequence, 21 residues long: Peptide PGLa-R4 (21 aa).

Leucine amide is present on L21.

Expressed by the skin glands.

The protein resides in the secreted. Functionally, antimicrobial peptide. The sequence is that of Peptide PGLa-R4 from Xenopus ruwenzoriensis (Uganda clawed frog).